A 917-amino-acid polypeptide reads, in one-letter code: Probable dipeptidyl-aminopeptidase B (917 aa).

Residues 1 to 16 (MATEKGHGRDDEERVP) show a composition bias toward basic and acidic residues. Residues 1–21 (MATEKGHGRDDEERVPLTRGS) form a disordered region. The Cytoplasmic portion of the chain corresponds to 1–99 (MATEKGHGRD…KPMHKSVKIA (99 aa)). A helical; Signal-anchor for type II membrane protein membrane pass occupies residues 100-120 (LWTLLFLSLGGWSLAFVLFIF). Topologically, residues 121-917 (RSHDTYETPI…RAATWAGLSI (797 aa)) are vacuolar. Residues asparagine 135, asparagine 351, and asparagine 574 are each glycosylated (N-linked (GlcNAc...) asparagine). Serine 756 serves as the catalytic Charge relay system. N-linked (GlcNAc...) asparagine glycosylation occurs at asparagine 815. Catalysis depends on charge relay system residues aspartate 833 and histidine 866. Asparagine 902 is a glycosylation site (N-linked (GlcNAc...) asparagine).

Belongs to the peptidase S9B family.

It is found in the vacuole membrane. The enzyme catalyses Release of an N-terminal dipeptide, Xaa-Yaa-|-Zaa-, from a polypeptide, preferentially when Yaa is Pro, provided Zaa is neither Pro nor hydroxyproline.. Its function is as follows. Type IV dipeptidyl-peptidase which removes N-terminal dipeptides sequentially from polypeptides having unsubstituted N-termini provided that the penultimate residue is proline. The protein is Probable dipeptidyl-aminopeptidase B (DAPB) of Ajellomyces capsulatus (strain H88) (Darling's disease fungus).